A 469-amino-acid chain; its full sequence is 3-isopropylmalate dehydratase large subunit (469 aa).

The [4Fe-4S] cluster site is built by Cys-350, Cys-410, and Cys-413.

The protein belongs to the aconitase/IPM isomerase family. LeuC type 1 subfamily. As to quaternary structure, heterodimer of LeuC and LeuD. [4Fe-4S] cluster is required as a cofactor.

The enzyme catalyses (2R,3S)-3-isopropylmalate = (2S)-2-isopropylmalate. It participates in amino-acid biosynthesis; L-leucine biosynthesis; L-leucine from 3-methyl-2-oxobutanoate: step 2/4. Catalyzes the isomerization between 2-isopropylmalate and 3-isopropylmalate, via the formation of 2-isopropylmaleate. The chain is 3-isopropylmalate dehydratase large subunit from Rhizobium etli (strain CIAT 652).